The chain runs to 1112 residues: cGMP-inhibited 3',5'-cyclic phosphodiesterase 3B (1112 aa).

Over residues 1–10 (MRRDERDAKA) the composition is skewed to basic and acidic residues. The segment at 1–25 (MRRDERDAKAMRSLQPPDGAGSPPE) is interaction with RAPGEF3. The tract at residues 1–26 (MRRDERDAKAMRSLQPPDGAGSPPES) is disordered. Serine 13 is subject to Phosphoserine. 6 helical membrane passes run 88–108 (FVLALLLGAEPESWAAGAAWL), 117–137 (HSLSPLFSIACAFFFLTCFLT), 152–172 (WWLLALPACCYLGDFLVWQWW), 192–212 (AAAGRLLLVLSCVGLLLTLAH), 220–240 (VLVLLLASFVWWVSFTSLGSL), and 247–267 (LLSGLVGGAGCLLALGLDHFF). A Phosphoserine; by PKB/AKT1 or PKB/AKT2 modification is found at serine 295. Phosphoserine is present on residues serine 296 and serine 442. The disordered stretch occupies residues 418–471 (EKGDRKLNKGLNRNSLPTPQLRRSSGTSGLLPVEQSSRWDRNNGKRPHQEFGIS). Over residues 428–445 (LNRNSLPTPQLRRSSGTS) the composition is skewed to polar residues. Positions 436–460 (PQLRRSSGTSGLLPVEQSSRWDRNN) are interaction with PIK3R6. A compositionally biased stretch (basic and acidic residues) spans 454-466 (SRWDRNNGKRPHQ). The region spanning 651–1079 (TNIEQEVSLD…KIWKEIVEEE (429 aa)) is the PDEase domain. Catalysis depends on histidine 737, which acts as the Proton donor. Histidine 737 provides a ligand contact to AMP. Residues histidine 741, histidine 821, aspartate 822, and aspartate 937 each coordinate Mg(2+). Residues aspartate 822, aspartate 937, and glutamine 988 each coordinate AMP. Composition is skewed to acidic residues over residues 1017–1041 (EEDNDTESGDDEDGEELDTEDEEME) and 1103–1112 (QVIEEADEEE). Disordered regions lie at residues 1017-1051 (EEDNDTESGDDEDGEELDTEDEEMENNLNPKPPRR) and 1092-1112 (ENSSLPQADEIQVIEEADEEE).

Belongs to the cyclic nucleotide phosphodiesterase family. PDE3 subfamily. In terms of assembly, homodimer. Interacts with PIK3CG; regulates PDE3B activity and thereby cAMP levels in cells. Interacts with RAPGEF3 and PIK3R6; form a signaling complex that regulates phosphatidylinositol 3-kinase gamma in angiogenesis. Interacts with ABHD15; this interaction regulates PDE3B's stability and expression and, thereby, impacts the antilipolytic action of insulin. It depends on Mg(2+) as a cofactor. Mn(2+) is required as a cofactor. Post-translationally, phosphorylation at Ser-295 mediates insulin-induced activation of PDE3B. In terms of tissue distribution, abundant in adipose tissues.

It localises to the membrane. The enzyme catalyses a nucleoside 3',5'-cyclic phosphate + H2O = a nucleoside 5'-phosphate + H(+). It carries out the reaction 3',5'-cyclic AMP + H2O = AMP + H(+). The catalysed reaction is 3',5'-cyclic GMP + H2O = GMP + H(+). Inhibited by cGMP. Its function is as follows. Cyclic nucleotide phosphodiesterase with a dual-specificity for the second messengers cAMP and cGMP, which are key regulators of many important physiological process. Regulates angiogenesis by inhibiting the cAMP-dependent guanine nucleotide exchange factor RAPGEF3 and downstream phosphatidylinositol 3-kinase gamma-mediated signaling. Controls cardiac contractility by reducing cAMP concentration in cardiocytes. The sequence is that of cGMP-inhibited 3',5'-cyclic phosphodiesterase 3B from Homo sapiens (Human).